Here is a 470-residue protein sequence, read N- to C-terminus: MNPNKKIITIGSISLGLVVFNVLLHIVSIIVTVLVLGKGEKNGSCNETVVREYNETVKVEKVIQWHNTSVIEHIPYWNGGTYMNNTEAICDVKGFAPFSKDNGIRIGSRGHVFVIREPFVSCSPKECRTFFLTQGSLLNDKHSNGTVKDRSPFRTLMSVEVGQSPNVYQARFEAVAWSATACHDGKKWMTIGVTGPDSKAVAVIHYGGVPTDVINSWAGDILRTQESSCTCIQGDCYWVMTDGPANRQAQYRIYKANQGRIIGQIDVSFNGGHIEECSCYPNDGKVECVCRDNWTGTNRPILVISPDLSYRVGYLCAGLPSDTPRGVDAQFTGSCTSPMGNQGYGVKGFGFRQGSDVWMGRTISRTSRSGFEILRIKNGWTQTSKEQVGRQVVVDNLNWSGYSGSFTLPVEMSGRDCLVPCFWVEMIRGKPEEKTIWTSSSSIVMCGVDYKVADWTWHDGAILPFDIDKM.

At methionine 1–serine 14 the chain is on the intravirion side. The interval glycine 11–threonine 32 is involved in apical transport and lipid raft association. Residues leucine 15–valine 35 form a helical membrane-spanning segment. A hypervariable stalk region region spans residues threonine 32–threonine 86. The Virion surface segment spans residues leucine 36 to methionine 470. 5 N-linked (GlcNAc...) asparagine; by host glycosylation sites follow: asparagine 42, asparagine 46, asparagine 54, asparagine 67, and asparagine 84. Residues isoleucine 89–methionine 470 are head of neuraminidase. 8 cysteine pairs are disulfide-bonded: cysteine 90/cysteine 417, cysteine 122/cysteine 127, cysteine 182/cysteine 229, cysteine 231/cysteine 236, cysteine 277/cysteine 290, cysteine 279/cysteine 288, cysteine 316/cysteine 335, and cysteine 421/cysteine 446. Position 116 (arginine 116) interacts with substrate. An N-linked (GlcNAc...) asparagine; by host glycan is attached at asparagine 144. Aspartate 149 (proton donor/acceptor) is an active-site residue. Arginine 150 provides a ligand contact to substrate. Residue glutamate 275–glutamate 276 participates in substrate binding. Arginine 291 contributes to the substrate binding site. Aspartate 292 is a binding site for Ca(2+). Residue asparagine 293 is glycosylated (N-linked (GlcNAc...) asparagine; by host). Residues glycine 296 and aspartate 322 each coordinate Ca(2+). Arginine 368 is a binding site for substrate. N-linked (GlcNAc...) asparagine; by host glycosylation occurs at asparagine 398. Tyrosine 402 (nucleophile) is an active-site residue.

This sequence belongs to the glycosyl hydrolase 34 family. As to quaternary structure, homotetramer. It depends on Ca(2+) as a cofactor. In terms of processing, N-glycosylated.

Its subcellular location is the virion membrane. It localises to the host apical cell membrane. It catalyses the reaction Hydrolysis of alpha-(2-&gt;3)-, alpha-(2-&gt;6)-, alpha-(2-&gt;8)- glycosidic linkages of terminal sialic acid residues in oligosaccharides, glycoproteins, glycolipids, colominic acid and synthetic substrates.. Its activity is regulated as follows. Inhibited by the neuraminidase inhibitors zanamivir (Relenza) and oseltamivir (Tamiflu). These drugs interfere with the release of progeny virus from infected cells and are effective against all influenza strains. Resistance to neuraminidase inhibitors is quite rare. Functionally, catalyzes the removal of terminal sialic acid residues from viral and cellular glycoconjugates. Cleaves off the terminal sialic acids on the glycosylated HA during virus budding to facilitate virus release. Additionally helps virus spread through the circulation by further removing sialic acids from the cell surface. These cleavages prevent self-aggregation and ensure the efficient spread of the progeny virus from cell to cell. Otherwise, infection would be limited to one round of replication. Described as a receptor-destroying enzyme because it cleaves a terminal sialic acid from the cellular receptors. May facilitate viral invasion of the upper airways by cleaving the sialic acid moieties on the mucin of the airway epithelial cells. Likely to plays a role in the budding process through its association with lipid rafts during intracellular transport. May additionally display a raft-association independent effect on budding. Plays a role in the determination of host range restriction on replication and virulence. Sialidase activity in late endosome/lysosome traffic seems to enhance virus replication. The chain is Neuraminidase from Influenza A virus (strain A/Quail/Italy/1117/1965 H10N8).